Reading from the N-terminus, the 253-residue chain is Probable transcriptional regulatory protein Mmar10_2433 (253 aa).

This sequence belongs to the TACO1 family.

Its subcellular location is the cytoplasm. The chain is Probable transcriptional regulatory protein Mmar10_2433 from Maricaulis maris (strain MCS10) (Caulobacter maris).